The sequence spans 448 residues: C4-dicarboxylate transport protein 2 (448 aa).

A run of 9 helical transmembrane segments spans residues 13–33 (SLYV…HFSP), 49–69 (LIKM…IAGM), 81–101 (LALL…LIVV), 149–169 (AFAK…GFAL), 193–213 (IVGI…AFTI), 227–247 (LMGA…GIVS), 294–314 (VVGL…SIYL), 335–355 (ITLL…TGSG), and 357–377 (IVLA…LALI).

Belongs to the dicarboxylate/amino acid:cation symporter (DAACS) (TC 2.A.23) family.

Its subcellular location is the cell inner membrane. Functionally, responsible for the transport of dicarboxylates such as succinate, fumarate, and malate from the periplasm across the membrane. The protein is C4-dicarboxylate transport protein 2 of Polaromonas naphthalenivorans (strain CJ2).